The primary structure comprises 99 residues: UPF0122 protein UU142 (99 aa).

Belongs to the UPF0122 family.

Its function is as follows. Might take part in the signal recognition particle (SRP) pathway. This is inferred from the conservation of its genetic proximity to ftsY/ffh. May be a regulatory protein. This chain is UPF0122 protein UU142, found in Ureaplasma parvum serovar 3 (strain ATCC 700970).